Reading from the N-terminus, the 262-residue chain is UDP-2,3-diacylglucosamine hydrolase (262 aa).

Residues Asp10, His12, Asp47, Asn86, His121, His218, and His220 each contribute to the Mn(2+) site.

This sequence belongs to the LpxH family. Mn(2+) serves as cofactor.

The protein localises to the cell inner membrane. Its subcellular location is the cytoplasm. The catalysed reaction is UDP-2-N,3-O-bis[(3R)-3-hydroxytetradecanoyl]-alpha-D-glucosamine + H2O = 2-N,3-O-bis[(3R)-3-hydroxytetradecanoyl]-alpha-D-glucosaminyl 1-phosphate + UMP + 2 H(+). The protein operates within glycolipid biosynthesis; lipid IV(A) biosynthesis; lipid IV(A) from (3R)-3-hydroxytetradecanoyl-[acyl-carrier-protein] and UDP-N-acetyl-alpha-D-glucosamine: step 4/6. Functionally, hydrolyzes the pyrophosphate bond of UDP-2,3-diacylglucosamine to yield 2,3-diacylglucosamine 1-phosphate (lipid X) and UMP by catalyzing the attack of water at the alpha-P atom. Involved in the biosynthesis of lipid A, a phosphorylated glycolipid that anchors the lipopolysaccharide to the outer membrane of the cell. This Porphyromonas gingivalis (strain ATCC BAA-308 / W83) protein is UDP-2,3-diacylglucosamine hydrolase.